The sequence spans 624 residues: Matrilin-4 (624 aa).

The first 21 residues, 1–21, serve as a signal peptide directing secretion; sequence MRGPCCWPLSLLLLFLQSWET. The region spanning 36 to 215 is the VWFA 1 domain; it reads DLVFMIDSSR…EFGLQFQGRL (180 aa). N71 carries an N-linked (GlcNAc...) asparagine glycan. 4 consecutive EGF-like domains span residues 217-257, 258-298, 299-339, and 340-380; these read GKDL…KNCL, ALDL…RSCR, AIDY…RSCR, and VRDF…KSCD. Disulfide bonds link C221/C232, C228/C241, C243/C256, C262/C273, C269/C282, C284/C297, C303/C314, C310/C323, C325/C338, C344/C355, C351/C364, and C366/C379. A glycan (N-linked (GlcNAc...) asparagine) is linked at N307. Residues 388–563 enclose the VWFA 2 domain; it reads DLVLLVDGSK…STMTHLLENL (176 aa). Residues 590-623 are a coiled coil; the sequence is EFQGRTLGALESLTQNLARLTERLEELENQLASR.

As to quaternary structure, interacts with COMP. In terms of tissue distribution, lung, brain, sternum, kidney and heart.

The protein resides in the secreted. Major component of the extracellular matrix of cartilage. The sequence is that of Matrilin-4 (Matn4) from Mus musculus (Mouse).